Consider the following 299-residue polypeptide: Plasmodesmata-located protein 5 (299 aa).

A signal peptide spans 1–25; that stretch reads MIKTKTTSLLCFLLTAVILMNPSSS. At 26 to 264 the chain is on the extracellular side; that stretch reads SPTDNYIYAV…NKDDNGVGKT (239 aa). 2 Gnk2-homologous domains span residues 29–135 and 137–237; these read DNYI…NKSF and GVQD…VGGS. 6 disulfide bridges follow: Cys-36-Cys-113, Cys-89-Cys-98, Cys-101-Cys-126, Cys-148-Cys-215, Cys-191-Cys-200, and Cys-203-Cys-228. A helical transmembrane segment spans residues 265–285; the sequence is LAIIIGIVTLIILLVVFLAFV. Positions 265-285 are necessary and sufficient for plasmodesmal targeting; that stretch reads LAIIIGIVTLIILLVVFLAFV. At 286 to 299 the chain is on the cytoplasmic side; the sequence is GKCCRKLQDEKWCK.

Belongs to the cysteine-rich repeat secretory protein family. Plasmodesmata-located proteins (PDLD) subfamily. Monomer. Interacts with PDLP1. In terms of assembly, (Microbial infection) Interacts with Grapevine fanleaf virus (GFLV) 2B-MP. In terms of tissue distribution, highly expressed in inflorescence nodes and rosette senescent leaves. Mostly expressed in cell wall junctions between leaf epidermal and mesophyl cells, and to a lesser extent at the cross walls between epidermal or cortex cells within the hypocotyl (at protein level). Low vascular expression in seedling and mature leaf, but high expression in senescing leaves (at protein level).

The protein localises to the cell membrane. It localises to the cell junction. Its subcellular location is the plasmodesma. In terms of biological role, modulates cell-to-cell trafficking. Has a positive role in innate immunity. Required for systemic acquired resistance (SAR) which is mediated by the signaling molecules azelaic acid (AzA), glycerol-3-phosphate (G3P), and salicylic acid (SA). Negative regulator of plasmodesmata permeability triggered by SA during immune responses, through regulation of callose deposition. Delays the trafficking of Tobacco Mosaic Virus (TMV) movement protein (MP). Required for symplastic signal transport. The sequence is that of Plasmodesmata-located protein 5 from Arabidopsis thaliana (Mouse-ear cress).